Consider the following 453-residue polypeptide: UDP-N-acetylmuramoylalanine--D-glutamate ligase (453 aa).

115 to 121 provides a ligand contact to ATP; it reads GTNGKTT.

Belongs to the MurCDEF family.

The protein resides in the cytoplasm. The enzyme catalyses UDP-N-acetyl-alpha-D-muramoyl-L-alanine + D-glutamate + ATP = UDP-N-acetyl-alpha-D-muramoyl-L-alanyl-D-glutamate + ADP + phosphate + H(+). It participates in cell wall biogenesis; peptidoglycan biosynthesis. Cell wall formation. Catalyzes the addition of glutamate to the nucleotide precursor UDP-N-acetylmuramoyl-L-alanine (UMA). The polypeptide is UDP-N-acetylmuramoylalanine--D-glutamate ligase (Geotalea daltonii (strain DSM 22248 / JCM 15807 / FRC-32) (Geobacter daltonii)).